The primary structure comprises 86 residues: Putative membrane protein insertion efficiency factor (86 aa).

The protein belongs to the UPF0161 family.

Its subcellular location is the cell inner membrane. Its function is as follows. Could be involved in insertion of integral membrane proteins into the membrane. The protein is Putative membrane protein insertion efficiency factor of Oleidesulfovibrio alaskensis (strain ATCC BAA-1058 / DSM 17464 / G20) (Desulfovibrio alaskensis).